The sequence spans 234 residues: Fibroblast growth factor-binding protein 1 (234 aa).

A signal peptide spans 1–23; that stretch reads MRTHGLTLLSLLLLAVPMLLVEA. The segment at 25 to 59 is disordered; that stretch reads KEGRNRRGSKASADESLALGKPGKEPRSQPTNYPI. 3 cysteine pairs are disulfide-bonded: cysteine 71-cysteine 88, cysteine 97-cysteine 130, and cysteine 106-cysteine 142. Residue asparagine 155 is glycosylated (N-linked (GlcNAc...) asparagine). Residues 169–200 are disordered; sequence MEPSPMDTVEVTTSSSPEKTQTMATKDPQCEE. A glycan (O-linked (GalNAc...) serine) is linked at serine 172. Positions 178–192 are enriched in polar residues; it reads EVTTSSSPEKTQTMA. The segment at 194-234 is sufficient for interaction with FGF2 and FGF2-induced effects; sequence KDPQCEEEDLKNQRKAALEYCGETWGSLCNFFLSMVQGSSC. Disulfide bonds link cysteine 198/cysteine 234 and cysteine 214/cysteine 222.

This sequence belongs to the fibroblast growth factor-binding protein family. In terms of assembly, found in a complex with FGFBP1, FGF1 and FGF2. Interacts with FGF1, FGF7, FGF10, FGF22 and HSPG2. Interacts with FGF2.

It localises to the secreted. It is found in the extracellular space. The protein localises to the cell membrane. Its function is as follows. Acts as a carrier protein that release fibroblast-binding factors (FGFs) from the extracellular matrix (EM) storage and thus enhance the mitogenic activity of FGFs. Enhances FGF2 signaling during tissue repair, angiogenesis and in tumor growth. The chain is Fibroblast growth factor-binding protein 1 (FGFBP1) from Bos taurus (Bovine).